The following is a 739-amino-acid chain: Malate synthase G (739 aa).

The span at 1–18 (MTEQELLSAQTADNAGTD) shows a compositional bias: polar residues. The disordered stretch occupies residues 1-23 (MTEQELLSAQTADNAGTDSTERV). Residues Val-135, 142 to 143 (RF), Ser-292, and Arg-329 each bind acetyl-CoA. Arg-356 serves as the catalytic Proton acceptor. Glyoxylate-binding positions include Arg-356, Glu-447, and 472–475 (GFLD). Mg(2+) contacts are provided by Glu-447 and Asp-475. An acetyl-CoA-binding site is contributed by Pro-556. Cys-633 is modified (cysteine sulfenic acid (-SOH)). Catalysis depends on Asp-647, which acts as the Proton donor.

This sequence belongs to the malate synthase family. GlcB subfamily. Monomer. The cofactor is Mg(2+).

It localises to the cytoplasm. It carries out the reaction glyoxylate + acetyl-CoA + H2O = (S)-malate + CoA + H(+). Its pathway is carbohydrate metabolism; glyoxylate cycle; (S)-malate from isocitrate: step 2/2. Inhibited by oxalate, glycolate and ATP. Functionally, involved in the glycolate utilization. Catalyzes the condensation and subsequent hydrolysis of acetyl-coenzyme A (acetyl-CoA) and glyoxylate to form malate and CoA. The sequence is that of Malate synthase G from Corynebacterium glutamicum (strain ATCC 13032 / DSM 20300 / JCM 1318 / BCRC 11384 / CCUG 27702 / LMG 3730 / NBRC 12168 / NCIMB 10025 / NRRL B-2784 / 534).